The chain runs to 158 residues: Large ribosomal subunit protein uL23 (158 aa).

Residues methionine 1–arginine 43 are disordered. A compositionally biased stretch (low complexity) spans lysine 12–alanine 23.

The protein belongs to the universal ribosomal protein uL23 family.

This protein binds to a specific region on the 26S rRNA. The chain is Large ribosomal subunit protein uL23 from Puccinia graminis (Black stem rust fungus).